Consider the following 1230-residue polypeptide: Serine/threonine-protein kinase PDK1 (1230 aa).

The interval 1–277 (MASSHFGPAS…ASSGALKKHS (277 aa)) is disordered. A compositionally biased stretch (low complexity) spans 34–50 (SSSSSSRSTTTCSSTSS). Positions 62-76 (ETSTAATSRSQLPSN) are enriched in polar residues. Residues 77–87 (RHSENEAEHDT) are compositionally biased toward basic and acidic residues. Polar residues-rich tracts occupy residues 107–117 (PRSNRLGTSPQ) and 140–175 (SKRQ…SSTI). Residues 185–202 (PNDRLSHDRESHSAERPR) are compositionally biased toward basic and acidic residues. Residues 217–226 (STPSSPTNSY) are compositionally biased toward polar residues. A compositionally biased stretch (basic and acidic residues) spans 252-262 (ARDGDDRERRQ). The Protein kinase domain maps to 281 to 801 (WVLGEELGVG…ITFIKTHPFF (521 aa)). ATP is bound by residues 291–293 (SYS) and Lys-319. Disordered stretches follow at residues 345-522 (LSDP…RSGA) and 534-597 (TLPP…KMSA). 2 stretches are compositionally biased toward polar residues: residues 378 to 397 (TASI…TVSN) and 408 to 433 (IVTT…SPTA). Composition is skewed to basic and acidic residues over residues 466–494 (GGED…DNMT) and 502–521 (VREE…ERSG). Over residues 535-544 (LPPPQIPSTP) the composition is skewed to pro residues. Residues 555 to 569 (DGHRTSRETPRDRPH) are compositionally biased toward basic and acidic residues. ATP is bound by residues 621-623 (SLA) and Glu-627. Asp-666 (proton acceptor) is an active-site residue. ATP-binding residues include Glu-670 and Asp-684. The span at 850–859 (EDEDGFEYDA) shows a compositional bias: acidic residues. 4 disordered regions span residues 850 to 871 (EDED…GGAV), 907 to 955 (LGED…GGNR), 972 to 1035 (GGGM…SDEA), and 1116 to 1152 (EADG…GGGH). A compositionally biased stretch (basic and acidic residues) spans 927–942 (GKREKEVEKKKGEKAR). Low complexity-rich tracts occupy residues 977 to 992 (GSAT…RTPG), 1002 to 1030 (RPGS…GASM), and 1120 to 1137 (DPAG…SHVE). A compositionally biased stretch (gly residues) spans 1138–1152 (SGGGGVGGGGRGGGH).

Belongs to the protein kinase superfamily. AGC Ser/Thr protein kinase family. PDPK1 subfamily.

It catalyses the reaction L-seryl-[protein] + ATP = O-phospho-L-seryl-[protein] + ADP + H(+). The enzyme catalyses L-threonyl-[protein] + ATP = O-phospho-L-threonyl-[protein] + ADP + H(+). Serine/threonine-protein kinase that functions in the sphingolipid-mediated signaling pathway, regulating organization of the plasma membrane. May phosphorylate PKC1 to activate the cell integrity MAPK cascade during cell wall and membrane stress. May regulate sphingolipid metabolism upstream of YPK1. This is Serine/threonine-protein kinase PDK1 from Cryptococcus neoformans var. grubii serotype A (strain H99 / ATCC 208821 / CBS 10515 / FGSC 9487) (Filobasidiella neoformans var. grubii).